A 38-amino-acid chain; its full sequence is Photosystem I reaction center subunit IX (38 aa).

A helical transmembrane segment spans residues 4 to 24; sequence FLTTAPVVAAIWFTLTAGILI.

It belongs to the PsaJ family.

Its subcellular location is the cellular thylakoid membrane. In terms of biological role, may help in the organization of the PsaE and PsaF subunits. The protein is Photosystem I reaction center subunit IX of Parasynechococcus marenigrum (strain WH8102).